The chain runs to 541 residues: Putative ammonium transporter sll0537 (541 aa).

Transmembrane regions (helical) follow at residues 6–26, 44–64, 86–106, 117–137, 161–181, 203–223, 235–255, 260–280, 283–303, 316–336, and 356–376; these read TLWL…FMCL, FADF…IMFG, LAVF…IISG, YLLV…DWAW, FAGS…TILV, MPFS…FNGG, IMVN…LISL, MIQV…ITAS, VVMT…AYLV, VDAV…VGLF, and LLGI…FLTL.

This sequence belongs to the ammonia transporter channel (TC 1.A.11.2) family.

The protein localises to the cell membrane. The protein is Putative ammonium transporter sll0537 of Synechocystis sp. (strain ATCC 27184 / PCC 6803 / Kazusa).